Here is a 407-residue protein sequence, read N- to C-terminus: DAZ-associated protein 1 (407 aa).

Position 1 is an N-acetylmethionine (methionine 1). 2 RRM domains span residues 10–97 (GKLF…RTRP) and 113–190 (NKIF…RAEP). Residues 74–117 (TLDGRNIDPKPCTPRGMQPERTRPKEGWQKGPRSDNSKSNKIFV) form a disordered region. Residues 91-111 (QPERTRPKEGWQKGPRSDNSK) show a composition bias toward basic and acidic residues. Residue lysine 150 is modified to N6-acetyllysine. Basic and acidic residues predominate over residues 185–194 (VKRAEPRDSK). Positions 185 to 407 (VKRAEPRDSK…NVQGFHPYRR (223 aa)) are disordered. Polar residues predominate over residues 195–207 (SQAPGQPGASQWG). The segment covering 247–262 (GPPPAGRGAPPPPPPF) has biased composition (pro residues). Arginine 253 is modified (omega-N-methylarginine). Residues 280–294 (FPQGYGAPPQFSFGY) show a composition bias toward low complexity. Over residues 295–315 (GPPPPPPDQFAPPGVPPPPAT) the composition is skewed to pro residues. Low complexity predominate over residues 364–379 (SDPSQQPPSYGGPSVP). Positions 380 to 393 (GSGGPPAGGSGFGR) are enriched in gly residues.

As to quaternary structure, interacts with DAZ and DAZL. Acetylation at Lys-150 is predominantly observed in the nuclear fraction, and may regulate nucleocytoplasmic transport. Mainly expressed in testis. Expressed to a lower level in thymus. Weakly or not expressed in heart, liver, brain, placenta, lung, skeletal muscle, kidney and pancreas.

It is found in the cytoplasm. Its subcellular location is the nucleus. Functionally, RNA-binding protein, which may be required during spermatogenesis. The sequence is that of DAZ-associated protein 1 (DAZAP1) from Homo sapiens (Human).